A 408-amino-acid chain; its full sequence is Arginine biosynthesis bifunctional protein ArgJ (408 aa).

The substrate site is built by Thr158, Lys184, Thr195, Glu281, Asn403, and Thr408. The active-site Nucleophile is Thr195.

The protein belongs to the ArgJ family. Heterotetramer of two alpha and two beta chains.

Its subcellular location is the cytoplasm. The enzyme catalyses N(2)-acetyl-L-ornithine + L-glutamate = N-acetyl-L-glutamate + L-ornithine. It catalyses the reaction L-glutamate + acetyl-CoA = N-acetyl-L-glutamate + CoA + H(+). It functions in the pathway amino-acid biosynthesis; L-arginine biosynthesis; L-ornithine and N-acetyl-L-glutamate from L-glutamate and N(2)-acetyl-L-ornithine (cyclic): step 1/1. Its pathway is amino-acid biosynthesis; L-arginine biosynthesis; N(2)-acetyl-L-ornithine from L-glutamate: step 1/4. Its function is as follows. Catalyzes two activities which are involved in the cyclic version of arginine biosynthesis: the synthesis of N-acetylglutamate from glutamate and acetyl-CoA as the acetyl donor, and of ornithine by transacetylation between N(2)-acetylornithine and glutamate. The protein is Arginine biosynthesis bifunctional protein ArgJ of Bacillus thuringiensis subsp. konkukian (strain 97-27).